Consider the following 239-residue polypeptide: Segregation and condensation protein A (239 aa).

The protein belongs to the ScpA family. As to quaternary structure, component of a cohesin-like complex composed of ScpA, ScpB and the Smc homodimer, in which ScpA and ScpB bind to the head domain of Smc. The presence of the three proteins is required for the association of the complex with DNA.

It localises to the cytoplasm. Functionally, participates in chromosomal partition during cell division. May act via the formation of a condensin-like complex containing Smc and ScpB that pull DNA away from mid-cell into both cell halves. The polypeptide is Segregation and condensation protein A (Streptococcus suis (strain 98HAH33)).